The primary structure comprises 1302 residues: Regulator of telomere elongation helicase 1 (1302 aa).

The Helicase ATP-binding domain occupies 7 to 297; it reads NGVTVDFPFQ…TKTAQQGEPH (291 aa). 42 to 49 lines the ATP pocket; that stretch reads SHTGTGKT. Cys-146, Cys-164, Cys-173, and Cys-208 together coordinate [4Fe-4S] cluster. The Nuclear localization signal motif lies at 152 to 168; it reads KKQESNHIQIHLCRKKV. The DEAH box motif lies at 251 to 254; that stretch reads DEAH. Residues 758-767 show a composition bias toward low complexity; it reads PAPAPRATAP. The segment at 758–819 is disordered; sequence PAPAPRATAP…AAGDPESSLC (62 aa). Basic and acidic residues predominate over residues 770–780; the sequence is REGEDAVREVK. A Nuclear localization signal motif is present at residues 873–879; the sequence is PRGGRKK. 4 disordered regions span residues 981–1006, 1019–1058, 1134–1153, and 1160–1234; these read RPEH…APDP, DPRE…GKQG, CTDL…PQEE, and VLTH…QAAG. The segment covering 1178–1187 has biased composition (polar residues); the sequence is KTQSKISSLL. The short motif at 1180–1187 is the PIP-box element; the sequence is QSKISSLL.

The protein belongs to the helicase family. RAD3/XPD subfamily. In terms of assembly, interacts with TERF1. Interacts (via PIP-box) with PCNA; the interaction is direct and essential for suppressing telomere fragility. Interacts with MMS19; the interaction mediates the association of RTEL1 with the cytosolic iron-sulfur protein assembly (CIA) complex.

The protein localises to the nucleus. The enzyme catalyses ATP + H2O = ADP + phosphate + H(+). A probable ATP-dependent DNA helicase implicated in telomere-length regulation, DNA repair and the maintenance of genomic stability. Acts as an anti-recombinase to counteract toxic recombination and limit crossover during meiosis. Regulates meiotic recombination and crossover homeostasis by physically dissociating strand invasion events and thereby promotes noncrossover repair by meiotic synthesis dependent strand annealing (SDSA) as well as disassembly of D loop recombination intermediates. Also disassembles T loops and prevents telomere fragility by counteracting telomeric G4-DNA structures, which together ensure the dynamics and stability of the telomere. The protein is Regulator of telomere elongation helicase 1 of Pongo abelii (Sumatran orangutan).